The chain runs to 215 residues: Large ribosomal subunit protein uL3 (215 aa).

A disordered region spans residues 134–166; that stretch reads MAHGSKNHRAPGSIGAGTTPGRVFPGKRMPGRM.

Belongs to the universal ribosomal protein uL3 family. In terms of assembly, part of the 50S ribosomal subunit. Forms a cluster with proteins L14 and L19.

Its function is as follows. One of the primary rRNA binding proteins, it binds directly near the 3'-end of the 23S rRNA, where it nucleates assembly of the 50S subunit. This chain is Large ribosomal subunit protein uL3, found in Gloeobacter violaceus (strain ATCC 29082 / PCC 7421).